The chain runs to 236 residues: Large ribosomal subunit protein uL3 (236 aa).

2 disordered regions span residues 132 to 153 (SNRA…GMAQ) and 200 to 236 (KGGD…KKGG). The span at 133–145 (NRASHGNSRSHNV) shows a compositional bias: polar residues. The residue at position 153 (glutamine 153) is an N5-methylglutamine. The span at 206 to 216 (VSPSIRSARPT) shows a compositional bias: polar residues. A compositionally biased stretch (low complexity) spans 217–228 (NNGNVNAAAKGG).

Belongs to the universal ribosomal protein uL3 family. In terms of assembly, part of the 50S ribosomal subunit. Forms a cluster with proteins L14 and L19. Post-translationally, methylated by PrmB.

Its function is as follows. One of the primary rRNA binding proteins, it binds directly near the 3'-end of the 23S rRNA, where it nucleates assembly of the 50S subunit. In Nitrosospira multiformis (strain ATCC 25196 / NCIMB 11849 / C 71), this protein is Large ribosomal subunit protein uL3.